Consider the following 499-residue polypeptide: Glutamate--tRNA ligase (499 aa).

Residues 12–22 carry the 'HIGH' region motif; that stretch reads PSPTGHLHIGN. A 'KMSKS' region motif is present at residues 259–263; that stretch reads KLSKR. Residue Lys262 participates in ATP binding.

Belongs to the class-I aminoacyl-tRNA synthetase family. Glutamate--tRNA ligase type 1 subfamily. Monomer.

It localises to the cytoplasm. It catalyses the reaction tRNA(Glu) + L-glutamate + ATP = L-glutamyl-tRNA(Glu) + AMP + diphosphate. Its function is as follows. Catalyzes the attachment of glutamate to tRNA(Glu) in a two-step reaction: glutamate is first activated by ATP to form Glu-AMP and then transferred to the acceptor end of tRNA(Glu). This chain is Glutamate--tRNA ligase, found in Lactobacillus johnsonii (strain CNCM I-12250 / La1 / NCC 533).